The sequence spans 191 residues: Protein YceI (191 aa).

The signal sequence occupies residues 1–22 (MKKSLLGLTFASLMFSAGSAVA).

The protein belongs to the UPF0312 family. Type 1 subfamily.

Its subcellular location is the periplasm. This Shigella flexneri protein is Protein YceI.